A 486-amino-acid chain; its full sequence is Glutamyl-tRNA(Gln) amidotransferase subunit A (486 aa).

Catalysis depends on charge relay system residues Lys-76 and Ser-151. Ser-175 acts as the Acyl-ester intermediate in catalysis.

It belongs to the amidase family. GatA subfamily. As to quaternary structure, heterotrimer of A, B and C subunits.

The enzyme catalyses L-glutamyl-tRNA(Gln) + L-glutamine + ATP + H2O = L-glutaminyl-tRNA(Gln) + L-glutamate + ADP + phosphate + H(+). Functionally, allows the formation of correctly charged Gln-tRNA(Gln) through the transamidation of misacylated Glu-tRNA(Gln) in organisms which lack glutaminyl-tRNA synthetase. The reaction takes place in the presence of glutamine and ATP through an activated gamma-phospho-Glu-tRNA(Gln). The sequence is that of Glutamyl-tRNA(Gln) amidotransferase subunit A from Chromohalobacter salexigens (strain ATCC BAA-138 / DSM 3043 / CIP 106854 / NCIMB 13768 / 1H11).